Reading from the N-terminus, the 393-residue chain is Putative N(4)-(beta-N-acetylglucosaminyl)-L-asparaginase GM21137 (393 aa).

An N-terminal signal peptide occupies residues 1–23 (MRTHLRASLWVLCLASTAFSILA). Disulfide bonds link C97–C102 and C196–C212. Residue T243 is the Nucleophile of the active site. Substrate contacts are provided by residues 271–274 (RVGD) and 294–297 (TGDG). C354 and C381 form a disulfide bridge.

Belongs to the Ntn-hydrolase family. Heterotetramer of two alpha and two beta chains arranged as a dimer of alpha/beta heterodimers. Cleaved into an alpha and beta chain by autocatalysis; this activates the enzyme. The N-terminal residue of the beta subunit is responsible for the nucleophile hydrolase activity.

It carries out the reaction N(4)-(beta-N-acetyl-D-glucosaminyl)-L-asparagine + H2O = N-acetyl-beta-D-glucosaminylamine + L-aspartate + H(+). Functionally, cleaves the GlcNAc-Asn bond which joins oligosaccharides to the peptide of asparagine-linked glycoproteins. This is Putative N(4)-(beta-N-acetylglucosaminyl)-L-asparaginase GM21137 from Drosophila sechellia (Fruit fly).